Consider the following 288-residue polypeptide: 2-dehydro-3-deoxyphosphooctonate aldolase (288 aa).

This sequence belongs to the KdsA family.

Its subcellular location is the cytoplasm. The enzyme catalyses D-arabinose 5-phosphate + phosphoenolpyruvate + H2O = 3-deoxy-alpha-D-manno-2-octulosonate-8-phosphate + phosphate. The protein operates within carbohydrate biosynthesis; 3-deoxy-D-manno-octulosonate biosynthesis; 3-deoxy-D-manno-octulosonate from D-ribulose 5-phosphate: step 2/3. Its pathway is bacterial outer membrane biogenesis; lipopolysaccharide biosynthesis. The polypeptide is 2-dehydro-3-deoxyphosphooctonate aldolase (Bdellovibrio bacteriovorus (strain ATCC 15356 / DSM 50701 / NCIMB 9529 / HD100)).